The following is a 119-amino-acid chain: Large ribosomal subunit protein bL20 (119 aa).

Belongs to the bacterial ribosomal protein bL20 family.

Binds directly to 23S ribosomal RNA and is necessary for the in vitro assembly process of the 50S ribosomal subunit. It is not involved in the protein synthesizing functions of that subunit. This chain is Large ribosomal subunit protein bL20, found in Nitrosomonas europaea (strain ATCC 19718 / CIP 103999 / KCTC 2705 / NBRC 14298).